Reading from the N-terminus, the 201-residue chain is 3-isopropylmalate dehydratase small subunit (201 aa).

The protein belongs to the LeuD family. LeuD type 1 subfamily. In terms of assembly, heterodimer of LeuC and LeuD.

It catalyses the reaction (2R,3S)-3-isopropylmalate = (2S)-2-isopropylmalate. It participates in amino-acid biosynthesis; L-leucine biosynthesis; L-leucine from 3-methyl-2-oxobutanoate: step 2/4. Catalyzes the isomerization between 2-isopropylmalate and 3-isopropylmalate, via the formation of 2-isopropylmaleate. The protein is 3-isopropylmalate dehydratase small subunit of Cereibacter sphaeroides (strain ATCC 17029 / ATH 2.4.9) (Rhodobacter sphaeroides).